The primary structure comprises 106 residues: Small ribosomal subunit protein bS20 (106 aa).

A compositionally biased stretch (basic residues) spans 1–32 (MAQKKPKRNLSALKRHRQSLKRRLRNKAKKSA). The interval 1–33 (MAQKKPKRNLSALKRHRQSLKRRLRNKAKKSAI) is disordered.

This sequence belongs to the bacterial ribosomal protein bS20 family.

Functionally, binds directly to 16S ribosomal RNA. The polypeptide is Small ribosomal subunit protein bS20 (rpsT) (Thermus thermophilus (strain ATCC BAA-163 / DSM 7039 / HB27)).